The chain runs to 159 residues: Crossover junction endodeoxyribonuclease RuvC (159 aa).

Residues Asp7, Glu67, and Asp139 contribute to the active site. Mg(2+) is bound by residues Asp7, Glu67, and Asp139.

It belongs to the RuvC family. As to quaternary structure, homodimer which binds Holliday junction (HJ) DNA. The HJ becomes 2-fold symmetrical on binding to RuvC with unstacked arms; it has a different conformation from HJ DNA in complex with RuvA. In the full resolvosome a probable DNA-RuvA(4)-RuvB(12)-RuvC(2) complex forms which resolves the HJ. It depends on Mg(2+) as a cofactor.

Its subcellular location is the cytoplasm. It catalyses the reaction Endonucleolytic cleavage at a junction such as a reciprocal single-stranded crossover between two homologous DNA duplexes (Holliday junction).. Its function is as follows. The RuvA-RuvB-RuvC complex processes Holliday junction (HJ) DNA during genetic recombination and DNA repair. Endonuclease that resolves HJ intermediates. Cleaves cruciform DNA by making single-stranded nicks across the HJ at symmetrical positions within the homologous arms, yielding a 5'-phosphate and a 3'-hydroxyl group; requires a central core of homology in the junction. The consensus cleavage sequence is 5'-(A/T)TT(C/G)-3'. Cleavage occurs on the 3'-side of the TT dinucleotide at the point of strand exchange. HJ branch migration catalyzed by RuvA-RuvB allows RuvC to scan DNA until it finds its consensus sequence, where it cleaves and resolves the cruciform DNA. The sequence is that of Crossover junction endodeoxyribonuclease RuvC from Orientia tsutsugamushi (strain Ikeda) (Rickettsia tsutsugamushi).